A 185-amino-acid chain; its full sequence is Peptidyl-tRNA hydrolase (185 aa).

TRNA is bound at residue Y14. H19 serves as the catalytic Proton acceptor. TRNA-binding residues include F64, N66, and N112.

Belongs to the PTH family. As to quaternary structure, monomer.

The protein resides in the cytoplasm. The enzyme catalyses an N-acyl-L-alpha-aminoacyl-tRNA + H2O = an N-acyl-L-amino acid + a tRNA + H(+). In terms of biological role, hydrolyzes ribosome-free peptidyl-tRNAs (with 1 or more amino acids incorporated), which drop off the ribosome during protein synthesis, or as a result of ribosome stalling. Catalyzes the release of premature peptidyl moieties from peptidyl-tRNA molecules trapped in stalled 50S ribosomal subunits, and thus maintains levels of free tRNAs and 50S ribosomes. The protein is Peptidyl-tRNA hydrolase of Halalkalibacterium halodurans (strain ATCC BAA-125 / DSM 18197 / FERM 7344 / JCM 9153 / C-125) (Bacillus halodurans).